Consider the following 365-residue polypeptide: Flagellin 1 (365 aa).

Belongs to the bacterial flagellin family.

The protein localises to the secreted. Its subcellular location is the bacterial flagellum. In terms of biological role, flagellin is the subunit protein which polymerizes to form the filaments of bacterial flagella. The polypeptide is Flagellin 1 (fliC1) (Proteus mirabilis).